Consider the following 220-residue polypeptide: NADH-quinone oxidoreductase subunit I (220 aa).

4Fe-4S ferredoxin-type domains lie at 71–102 (LQRL…IITH) and 112–141 (DSYT…MGNR). Residues Cys82, Cys85, Cys88, Cys92, Cys121, Cys124, Cys127, and Cys131 each coordinate [4Fe-4S] cluster. The segment at 189–220 (ATPLDYVQEPSKEESKKETPTSPEANKGDENV) is disordered. A compositionally biased stretch (basic and acidic residues) spans 198–207 (PSKEESKKET).

Belongs to the complex I 23 kDa subunit family. In terms of assembly, NDH-1 is composed of 14 different subunits. Subunits NuoA, H, J, K, L, M, N constitute the membrane sector of the complex. Requires [4Fe-4S] cluster as cofactor.

It localises to the cell inner membrane. It carries out the reaction a quinone + NADH + 5 H(+)(in) = a quinol + NAD(+) + 4 H(+)(out). Its function is as follows. NDH-1 shuttles electrons from NADH, via FMN and iron-sulfur (Fe-S) centers, to quinones in the respiratory chain. The immediate electron acceptor for the enzyme in this species is believed to be ubiquinone. Couples the redox reaction to proton translocation (for every two electrons transferred, four hydrogen ions are translocated across the cytoplasmic membrane), and thus conserves the redox energy in a proton gradient. This chain is NADH-quinone oxidoreductase subunit I, found in Helicobacter acinonychis (strain Sheeba).